Reading from the N-terminus, the 133-residue chain is Small ribosomal subunit protein uS11 (133 aa).

It belongs to the universal ribosomal protein uS11 family. As to quaternary structure, part of the 30S ribosomal subunit. Interacts with proteins S7 and S18. Binds to IF-3.

In terms of biological role, located on the platform of the 30S subunit, it bridges several disparate RNA helices of the 16S rRNA. Forms part of the Shine-Dalgarno cleft in the 70S ribosome. The protein is Small ribosomal subunit protein uS11 of Methylibium petroleiphilum (strain ATCC BAA-1232 / LMG 22953 / PM1).